The primary structure comprises 357 residues: DNA integrity scanning protein DisA (357 aa).

In terms of domain architecture, DAC spans 8–146 (VKSMINILQL…GNLRYTLKDI (139 aa)). ATP is bound by residues G75, L93, and 106–110 (MRHRT).

Belongs to the DisA family. In terms of assembly, homooctamer. Mg(2+) is required as a cofactor.

The catalysed reaction is 2 ATP = 3',3'-c-di-AMP + 2 diphosphate. Functionally, participates in a DNA-damage check-point that is active prior to asymmetric division when DNA is damaged. DisA forms globular foci that rapidly scan along the chromosomes during sporulation, searching for lesions. When a lesion is present, DisA pauses at the lesion site. This triggers a cellular response that culminates in a temporary block in sporulation initiation. Also has diadenylate cyclase activity, catalyzing the condensation of 2 ATP molecules into cyclic di-AMP (c-di-AMP). c-di-AMP acts as a signaling molecule that couples DNA integrity with progression of sporulation. The rise in c-di-AMP level generated by DisA while scanning the chromosome, operates as a positive signal that advances sporulation; upon encountering a lesion, the DisA focus arrests at the damaged site and halts c-di-AMP synthesis. The protein is DNA integrity scanning protein DisA of Bacillus mycoides (strain KBAB4) (Bacillus weihenstephanensis).